We begin with the raw amino-acid sequence, 185 residues long: Alcohol dehydrogenase 1 (185 aa).

Residues 10–15 (GLGGVG), D34, K39, 103–105 (VGV), and R180 contribute to the NAD(+) site.

Belongs to the zinc-containing alcohol dehydrogenase family. Class-I subfamily. As to quaternary structure, homodimer. Requires Zn(2+) as cofactor.

The protein localises to the cytoplasm. The catalysed reaction is a primary alcohol + NAD(+) = an aldehyde + NADH + H(+). It carries out the reaction a secondary alcohol + NAD(+) = a ketone + NADH + H(+). This Anas platyrhynchos (Mallard) protein is Alcohol dehydrogenase 1 (ADH1).